The sequence spans 152 residues: Ribosome maturation factor RimP (152 aa).

It belongs to the RimP family.

It localises to the cytoplasm. Functionally, required for maturation of 30S ribosomal subunits. In Sodalis glossinidius (strain morsitans), this protein is Ribosome maturation factor RimP.